The primary structure comprises 426 residues: 3-phosphoshikimate 1-carboxyvinyltransferase (426 aa).

Lys22, Ser23, and Arg27 together coordinate 3-phosphoshikimate. Position 22 (Lys22) interacts with phosphoenolpyruvate. Phosphoenolpyruvate is bound by residues Gly96 and Arg124. 3-phosphoshikimate contacts are provided by Ser170, Ser171, Gln172, Ser198, Asp314, Asn337, and Lys341. Gln172 contacts phosphoenolpyruvate. Asp314 serves as the catalytic Proton acceptor. Positions 345, 387, and 412 each coordinate phosphoenolpyruvate.

It belongs to the EPSP synthase family. Monomer.

The protein localises to the cytoplasm. The catalysed reaction is 3-phosphoshikimate + phosphoenolpyruvate = 5-O-(1-carboxyvinyl)-3-phosphoshikimate + phosphate. It participates in metabolic intermediate biosynthesis; chorismate biosynthesis; chorismate from D-erythrose 4-phosphate and phosphoenolpyruvate: step 6/7. In terms of biological role, catalyzes the transfer of the enolpyruvyl moiety of phosphoenolpyruvate (PEP) to the 5-hydroxyl of shikimate-3-phosphate (S3P) to produce enolpyruvyl shikimate-3-phosphate and inorganic phosphate. This chain is 3-phosphoshikimate 1-carboxyvinyltransferase, found in Shewanella pealeana (strain ATCC 700345 / ANG-SQ1).